The sequence spans 635 residues: Ankyrin repeat and SOCS box protein 2 (635 aa).

A required for FLNA degradation region spans residues 8–16 (RGSQCTIGQ). The UIM domain occupies 26–45 (SEDELVQMAIEQSLADKTRG). ANK repeat units lie at residues 104–133 (APAD…NLAE), 137–167 (EGWL…TIDQ), 171–200 (QEET…EPDI), 204–233 (SRET…DTNH), 237–266 (RGWT…KVES), 270–299 (YGIT…DINT), 303–332 (DNAS…DANK), 336–365 (DGLL…RTRI), 368–397 (SGVS…DVNT), 410–439 (RRSS…DPNR), 440–469 (DVIS…NIDA), and 476–504 (TAFP…DGEP). At Ser-371 the chain carries Phosphoserine; by MAPK. The 50-residue stretch at 586-635 (IKEKAEPPRPLAHLCRLRVRKAIGKYRIKLLDTLPLPGRLIRYLKYENTQ) folds into the SOCS box domain.

The protein belongs to the ankyrin SOCS box (ASB) family. In terms of assembly, component of a probable ECS E3 ubiquitin-protein ligase complex which contains CUL5, either RBX1 or RNF7/RBX2, Elongin BC complex (ELOB and ELOC) and ASB2. Interacts with SKP2. Through its interaction with SKP2, likely to bridge the formation of dimeric E3-ubiquitin-protein ligase complexes composed of an ECS complex and an SCF(SKP2) complex. Interacts with JAK2; the interaction targets JAK2 for Notch-mediated proteasomal degradation. Interacts with TCF3/E2A; the interaction is mediated by SKP2 and targets TCF3 for Notch-mediated proteasomal degradation. As to quaternary structure, interacts with DES. In terms of processing, monoubiquitinated. Not monoubiquitinated. Post-translationally, phosphorylation at Ser-371 is required for association with FLNA and subsequent FLNA degradation. Expressed in muscle cells. In terms of tissue distribution, expressed in hematopoietic cells.

The protein localises to the cytoplasm. It is found in the cytoskeleton. It localises to the stress fiber. Its subcellular location is the myofibril. The protein resides in the sarcomere. The protein localises to the z line. Its pathway is protein modification; protein ubiquitination. In terms of biological role, substrate-recognition component of a SCF-like ECS (Elongin-Cullin-SOCS-box protein) E3 ubiquitin-protein ligase complex which mediates the ubiquitination and subsequent proteasomal degradation of target proteins. Mediates Notch-induced ubiquitination and degradation of substrates including TCF3/E2A and JAK2. Required during embryonic heart development for complete heart looping. Required for cardiomyocyte differentiation. Specifically promotes the ubiquitination of SMAD9 and targets it for proteasomal degradation, leading to avoid excessive accumulation of SMAD9. Plays a role in the regulation of NK-cell migration by modulating protein levels of filamin A/FLNA via regulation of its ubiquitination and proteasome degradation. Functionally, involved in myogenic differentiation and targets filamin FLNB for proteasomal degradation but not filamin FLNA. Also targets DES for proteasomal degradation. Acts as a negative regulator of skeletal muscle mass. Its function is as follows. Targets filamins FLNA and FLNB for proteasomal degradation. This leads to enhanced adhesion of hematopoietic cells to fibronectin. Required for FLNA degradation in immature cardiomyocytes which is necessary for actin cytoskeleton remodeling, leading to proper organization of myofibrils and function of mature cardiomyocytes. Required for degradation of FLNA and FLNB in immature dendritic cells (DC) which enhances immature DC migration by promoting DC podosome formation and DC-mediated degradation of the extracellular matrix. Does not promote proteasomal degradation of tyrosine-protein kinases JAK1 or JAK2 in hematopoietic cells. The sequence is that of Ankyrin repeat and SOCS box protein 2 (ASB2) from Homo sapiens (Human).